The sequence spans 400 residues: Signal recognition particle receptor FtsY (400 aa).

Disordered regions lie at residues 12–37 and 51–86; these read TKKT…QEEQ and NKIK…KDKK. Basic and acidic residues predominate over residues 51–72; sequence NKIKKTKTSETKKQEKPIETLK. GTP-binding positions include 192–199, 278–282, and 342–345; these read GVNGTGKT, DTAGR, and TKMD.

Belongs to the GTP-binding SRP family. FtsY subfamily. Part of the signal recognition particle protein translocation system, which is composed of SRP and FtsY.

Its subcellular location is the cell membrane. It is found in the cytoplasm. It carries out the reaction GTP + H2O = GDP + phosphate + H(+). Involved in targeting and insertion of nascent membrane proteins into the cytoplasmic membrane. Acts as a receptor for the complex formed by the signal recognition particle (SRP) and the ribosome-nascent chain (RNC). The polypeptide is Signal recognition particle receptor FtsY (Mycoplasma mycoides subsp. mycoides SC (strain CCUG 32753 / NCTC 10114 / PG1)).